A 566-amino-acid polypeptide reads, in one-letter code: MLNKLCKILFFINLLLVAVQSYASPPPSLPAAEIDTKDKDVSSNSDISFFDKFKQFFSKSKKKNISPKQPNEQTKAANQEEPKLASQEHTEADASEPFIDTGNTALPSVTASNEHENSVNLASHDIQESNETEASKPFIDVGNTALPSAASNDVHTNTEHENSTNLASNIITPNVPRPIVSMPPAQAGSYVVPPQRPVQIYKPTNLPPVHKPIPLNPSPEANKEEESVAPIAPQSIPNMPAVSPPVVSPPVIQDTTTPSTMPTTVPPAVPSNVPAPPVMPTNQPSTQPITPPSPNTPVTTPSKVVPTTDSSAEINNSQETFVAVSDVPKKQDWNTPLIPVVVVKPNQPQALEKQVNNNQTTNNQEKSPPVSSSNVTIQKQDDKVNNETSESTTKFVKDETQMLLLPDDDIVLGKLTEQATLEQMDMYAYIELFQKKEEWIASAKRRKVVESFIKYDNDINKKKDIYANLSYCKAVDNAFRAVDRNNLFGLRALLDVYPILQEKSRSGETLLTAAIYNDNYYLAKFLVIRGIKISTLNDECQYPLDIALAQGNANIACMLIKAKGYQ.

3 disordered regions span residues 61–118 (KKKN…HENS), 276–314 (PPVM…SAEI), and 355–392 (VNNN…SEST). The segment covering 78–92 (NQEEPKLASQEHTEA) has biased composition (basic and acidic residues). Over residues 101–112 (TGNTALPSVTAS) the composition is skewed to polar residues. Residues 296 to 308 (TPVTTPSKVVPTT) show a composition bias toward low complexity. The segment covering 365 to 378 (EKSPPVSSSNVTIQ) has biased composition (polar residues). ANK repeat units follow at residues 506–535 (SGET…KIST) and 539–566 (ECQY…KGYQ).

The chain is Putative ankyrin repeat protein RF_0987 from Rickettsia felis (strain ATCC VR-1525 / URRWXCal2) (Rickettsia azadi).